Reading from the N-terminus, the 388-residue chain is UPF0496 protein 1 (388 aa).

The segment at 1-25 (MGNSSSSGSHRPPRPASSESALPPA) is disordered. The stretch at 198–227 (QAVYRQQLTMLEKLQQRKHRLDKKVRAIKA) forms a coiled coil. A run of 2 helical transmembrane segments spans residues 234 to 254 (IIFA…AAIA) and 257 to 277 (PVAA…GKWI). The stretch at 344-376 (VEEIKKKLEVFMKSVEDLGEQADRCSRDIRRAR) forms a coiled coil.

It belongs to the UPF0496 family.

It is found in the membrane. In Oryza sativa subsp. japonica (Rice), this protein is UPF0496 protein 1.